The primary structure comprises 234 residues: Carboxy-S-adenosyl-L-methionine synthase (234 aa).

Residues Tyr35, 60 to 62 (GCS), 83 to 84 (DN), 109 to 110 (DI), Asn124, and Arg191 each bind S-adenosyl-L-methionine.

The protein belongs to the class I-like SAM-binding methyltransferase superfamily. Cx-SAM synthase family. In terms of assembly, homodimer.

The catalysed reaction is prephenate + S-adenosyl-L-methionine = carboxy-S-adenosyl-L-methionine + 3-phenylpyruvate + H2O. Its function is as follows. Catalyzes the conversion of S-adenosyl-L-methionine (SAM) to carboxy-S-adenosyl-L-methionine (Cx-SAM). This is Carboxy-S-adenosyl-L-methionine synthase from Campylobacter concisus (strain 13826).